The chain runs to 699 residues: Elongation factor G (699 aa).

The 282-residue stretch at 8 to 289 (ERYRNIGISA…AVVEYMPAPT (282 aa)) folds into the tr-type G domain. GTP is bound by residues 17-24 (AHIDAGKT), 88-92 (DTPGH), and 142-145 (NKMD).

Belongs to the TRAFAC class translation factor GTPase superfamily. Classic translation factor GTPase family. EF-G/EF-2 subfamily.

It localises to the cytoplasm. Functionally, catalyzes the GTP-dependent ribosomal translocation step during translation elongation. During this step, the ribosome changes from the pre-translocational (PRE) to the post-translocational (POST) state as the newly formed A-site-bound peptidyl-tRNA and P-site-bound deacylated tRNA move to the P and E sites, respectively. Catalyzes the coordinated movement of the two tRNA molecules, the mRNA and conformational changes in the ribosome. This Variovorax paradoxus (strain S110) protein is Elongation factor G.